Reading from the N-terminus, the 108-residue chain is PTS system fructose-like EIIB component 1 (108 aa).

The PTS EIIB type-2 domain occupies 1–104 (MSKKLIALCA…IIKEIEEMIA (104 aa)). The Phosphocysteine intermediate role is filled by C11. C11 carries the post-translational modification Phosphocysteine; by EIIA.

Its subcellular location is the cytoplasm. The catalysed reaction is D-fructose(out) + N(pros)-phospho-L-histidyl-[protein] = D-fructose 1-phosphate(in) + L-histidyl-[protein]. In terms of biological role, the phosphoenolpyruvate-dependent sugar phosphotransferase system (sugar PTS), a major carbohydrate active transport system, catalyzes the phosphorylation of incoming sugar substrates concomitantly with their translocation across the cell membrane. The enzyme II FryABC PTS system is involved in fructose transport. This Escherichia coli O157:H7 protein is PTS system fructose-like EIIB component 1 (fryB).